An 85-amino-acid polypeptide reads, in one-letter code: Dynein light chain 1, cytoplasmic (85 aa).

This sequence belongs to the dynein light chain family. As to quaternary structure, homodimer. Cytoplasmic dynein consists of two catalytic heavy chains (HCs) and a number of non-catalytic subunits which present intermediate chains (ICs), light intermediate chains (LICs) and light chains (LCs). Component of the nuclear pore complex (NPC). NPC constitutes the exclusive means of nucleocytoplasmic transport. NPCs allow the passive diffusion of ions and small molecules and the active, nuclear transport receptor-mediated bidirectional transport of macromolecules such as proteins, RNAs, ribonucleoparticles (RNPs), and ribosomal subunits across the nuclear envelope. Due to its 8-fold rotational symmetry, all subunits are present with 8 copies or multiples thereof.

Its subcellular location is the cytoplasm. The protein resides in the cytoskeleton. It localises to the nucleus. It is found in the nuclear pore complex. In terms of biological role, acts as one of several non-catalytic accessory components of the cytoplasmic dynein complex that are thought to be involved in linking dynein to cargos and to adapter proteins that regulate dynein function. Cytoplasmic dynein 1 acts as a motor for the intracellular retrograde motility of vesicles and organelles along microtubules. May play a role in changing or maintaining the spatial distribution of cytoskeletal structures. Also a component of the nuclear pore complex. The protein is Dynein light chain 1, cytoplasmic (dlc2) of Schizosaccharomyces pombe (strain 972 / ATCC 24843) (Fission yeast).